We begin with the raw amino-acid sequence, 349 residues long: UDP-N-acetylenolpyruvoylglucosamine reductase (349 aa).

Residues 25–213 (VGPVARRLVT…VEQGERTDPQ (189 aa)) form the FAD-binding PCMH-type domain. Residue Arg-165 is part of the active site. Ser-242 functions as the Proton donor in the catalytic mechanism. Glu-341 is an active-site residue.

This sequence belongs to the MurB family. Requires FAD as cofactor.

It localises to the cytoplasm. The catalysed reaction is UDP-N-acetyl-alpha-D-muramate + NADP(+) = UDP-N-acetyl-3-O-(1-carboxyvinyl)-alpha-D-glucosamine + NADPH + H(+). It functions in the pathway cell wall biogenesis; peptidoglycan biosynthesis. In terms of biological role, cell wall formation. The chain is UDP-N-acetylenolpyruvoylglucosamine reductase from Mycolicibacterium gilvum (strain PYR-GCK) (Mycobacterium gilvum (strain PYR-GCK)).